The primary structure comprises 331 residues: Ferrochelatase (331 aa).

Fe cation contacts are provided by His187 and Glu286.

The protein belongs to the ferrochelatase family.

The protein localises to the cytoplasm. It carries out the reaction heme b + 2 H(+) = protoporphyrin IX + Fe(2+). The protein operates within porphyrin-containing compound metabolism; protoheme biosynthesis; protoheme from protoporphyrin-IX: step 1/1. Catalyzes the ferrous insertion into protoporphyrin IX. This is Ferrochelatase from Legionella pneumophila (strain Corby).